The sequence spans 630 residues: Chaperone protein HtpG (630 aa).

The segment at Met-1–Arg-343 is a; substrate-binding. The segment at Glu-344–Gln-554 is b. Positions Ile-555–Ile-630 are c.

Belongs to the heat shock protein 90 family. Homodimer.

It is found in the cytoplasm. In terms of biological role, molecular chaperone. Has ATPase activity. In Sulfurimonas denitrificans (strain ATCC 33889 / DSM 1251) (Thiomicrospira denitrificans (strain ATCC 33889 / DSM 1251)), this protein is Chaperone protein HtpG.